The chain runs to 424 residues: Gamma-glutamyl phosphate reductase (424 aa).

The protein belongs to the gamma-glutamyl phosphate reductase family.

The protein localises to the cytoplasm. The catalysed reaction is L-glutamate 5-semialdehyde + phosphate + NADP(+) = L-glutamyl 5-phosphate + NADPH + H(+). Its pathway is amino-acid biosynthesis; L-proline biosynthesis; L-glutamate 5-semialdehyde from L-glutamate: step 2/2. Its function is as follows. Catalyzes the NADPH-dependent reduction of L-glutamate 5-phosphate into L-glutamate 5-semialdehyde and phosphate. The product spontaneously undergoes cyclization to form 1-pyrroline-5-carboxylate. This is Gamma-glutamyl phosphate reductase from Dehalococcoides mccartyi (strain ATCC BAA-2100 / JCM 16839 / KCTC 5957 / BAV1).